The primary structure comprises 466 residues: Integrator complex subunit 12 (466 aa).

Residues 41-101 (KGNDSVYRPQ…EAEKRSADKM (61 aa)) are disordered. Over residues 69–84 (KASSSTPSSSMLSKPL) the composition is skewed to low complexity. Over residues 85 to 101 (TSEKLKKEAEKRSADKM) the composition is skewed to basic and acidic residues. The PHD-type zinc-finger motif lies at 156–212 (GLACVVCRQMTVFSGNQLVECQECHNLYHQDCHKPQVTDKDVNDPRLVWYCARCTRQ). 2 disordered regions span residues 216 to 251 (MAQK…ELKA) and 311 to 466 (GTSS…KLKK). Polar residues-rich tracts occupy residues 218 to 233 (QKNQ…SAVS) and 311 to 329 (GTSS…SVQK). The segment covering 338-373 (PSKPGSVSKSGSGGSSSSSTIPIKPLPPLILGKTGL) has biased composition (low complexity). The span at 374 to 386 (SRSMSSDNVSKTG) shows a compositional bias: polar residues. Positions 392–423 (PSSAGSVSSLSSQLGSNNGSSSAAGSNVTSSN) are enriched in low complexity. Residues 453 to 466 (QMVKKKAAQKKLKK) show a composition bias toward basic residues.

It belongs to the Integrator subunit 12 family. Component of the Integrator complex, composed of core subunits INTS1, INTS2, INTS3, INTS4, INTS5, INTS6, INTS7, INTS8, INTS9/RC74, INTS10, INTS11/CPSF3L, INTS12, INTS13, INTS14 and INTS15. The core complex associates with protein phosphatase 2A subunits PPP2CA and PPP2R1A, to form the Integrator-PP2A (INTAC) complex.

The protein localises to the nucleus. Functionally, component of the integrator complex, a multiprotein complex that terminates RNA polymerase II (Pol II) transcription in the promoter-proximal region of genes. The integrator complex provides a quality checkpoint during transcription elongation by driving premature transcription termination of transcripts that are unfavorably configured for transcriptional elongation: the complex terminates transcription by (1) catalyzing dephosphorylation of the C-terminal domain (CTD) of Pol II subunit POLR2A/RPB1 and SUPT5H/SPT5, (2) degrading the exiting nascent RNA transcript via endonuclease activity and (3) promoting the release of Pol II from bound DNA. The integrator complex is also involved in terminating the synthesis of non-coding Pol II transcripts, such as enhancer RNAs (eRNAs), small nuclear RNAs (snRNAs), telomerase RNAs and long non-coding RNAs (lncRNAs). The protein is Integrator complex subunit 12 (ints12) of Xenopus tropicalis (Western clawed frog).